The primary structure comprises 185 residues: Elongation factor P (185 aa).

The protein belongs to the elongation factor P family.

Its subcellular location is the cytoplasm. The protein operates within protein biosynthesis; polypeptide chain elongation. In terms of biological role, involved in peptide bond synthesis. Stimulates efficient translation and peptide-bond synthesis on native or reconstituted 70S ribosomes in vitro. Probably functions indirectly by altering the affinity of the ribosome for aminoacyl-tRNA, thus increasing their reactivity as acceptors for peptidyl transferase. The polypeptide is Elongation factor P (Caldicellulosiruptor bescii (strain ATCC BAA-1888 / DSM 6725 / KCTC 15123 / Z-1320) (Anaerocellum thermophilum)).